The primary structure comprises 232 residues: Phosphatidylserine decarboxylase proenzyme (232 aa).

Ser190 (schiff-base intermediate with substrate; via pyruvic acid) is an active-site residue. Ser190 carries the pyruvic acid (Ser); by autocatalysis modification.

This sequence belongs to the phosphatidylserine decarboxylase family. PSD-A subfamily. Heterodimer of a large membrane-associated beta subunit and a small pyruvoyl-containing alpha subunit. It depends on pyruvate as a cofactor. In terms of processing, is synthesized initially as an inactive proenzyme. Formation of the active enzyme involves a self-maturation process in which the active site pyruvoyl group is generated from an internal serine residue via an autocatalytic post-translational modification. Two non-identical subunits are generated from the proenzyme in this reaction, and the pyruvate is formed at the N-terminus of the alpha chain, which is derived from the carboxyl end of the proenzyme. The post-translation cleavage follows an unusual pathway, termed non-hydrolytic serinolysis, in which the side chain hydroxyl group of the serine supplies its oxygen atom to form the C-terminus of the beta chain, while the remainder of the serine residue undergoes an oxidative deamination to produce ammonia and the pyruvoyl prosthetic group on the alpha chain.

The protein localises to the cell membrane. It carries out the reaction a 1,2-diacyl-sn-glycero-3-phospho-L-serine + H(+) = a 1,2-diacyl-sn-glycero-3-phosphoethanolamine + CO2. It participates in phospholipid metabolism; phosphatidylethanolamine biosynthesis; phosphatidylethanolamine from CDP-diacylglycerol: step 2/2. Functionally, catalyzes the formation of phosphatidylethanolamine (PtdEtn) from phosphatidylserine (PtdSer). The chain is Phosphatidylserine decarboxylase proenzyme from Rhodopseudomonas palustris (strain BisB5).